We begin with the raw amino-acid sequence, 78 residues long: Large ribosomal subunit protein bL28 (78 aa).

The tract at residues 1-22 (MAKVCQVTGKRPVTGHNVSHAK) is disordered.

This sequence belongs to the bacterial ribosomal protein bL28 family.

In Teredinibacter turnerae (strain ATCC 39867 / T7901), this protein is Large ribosomal subunit protein bL28.